A 180-amino-acid polypeptide reads, in one-letter code: Ribulose bisphosphate carboxylase small subunit, chloroplastic 3 (180 aa).

Residues 1-56 (MASSLMSNAITAVVGASGAQANMVAPFNGLKSIASFPVTRKSNDITSIASNGGRVQ) constitute a chloroplast transit peptide.

It belongs to the RuBisCO small chain family. As to quaternary structure, heterohexadecamer of 8 large and 8 small subunits.

The protein resides in the plastid. The protein localises to the chloroplast. RuBisCO catalyzes two reactions: the carboxylation of D-ribulose 1,5-bisphosphate, the primary event in carbon dioxide fixation, as well as the oxidative fragmentation of the pentose substrate. Both reactions occur simultaneously and in competition at the same active site. Although the small subunit is not catalytic it is essential for maximal activity. This Amaranthus hypochondriacus (Prince-of-Wales feather) protein is Ribulose bisphosphate carboxylase small subunit, chloroplastic 3.